The primary structure comprises 90 residues: Progonadoliberin-3 (90 aa).

The N-terminal stretch at 1–23 (MEASSRVTVQVLLLALVVQVTLS) is a signal peptide. Gln24 is subject to Pyrrolidone carboxylic acid. Glycine amide is present on Gly33.

It belongs to the GnRH family.

The protein localises to the secreted. Stimulates the secretion of gonadotropins. This is Progonadoliberin-3 (gnrh3) from Sparus aurata (Gilthead sea bream).